Reading from the N-terminus, the 83-residue chain is Turripeptide Lol11.1 (83 aa).

The signal sequence occupies residues Met1–Thr27.

It belongs to the conopeptide I2-like superfamily. In terms of processing, contains 4 disulfide bonds. As to expression, expressed by the venom duct.

The protein localises to the secreted. Its function is as follows. Acts as a neurotoxin by inhibiting voltage-gated potassium channels (Kv). The sequence is that of Turripeptide Lol11.1 from Iotyrris olangoensis (Sea snail).